Consider the following 40-residue polypeptide: Meleagrin (40 aa).

Pyrrolidone carboxylic acid is present on Gln1. Intrachain disulfides connect Cys6-Cys33, Cys12-Cys28, and Cys16-Cys32.

The protein belongs to the transferrin family.

This chain is Meleagrin, found in Meleagris gallopavo (Wild turkey).